Reading from the N-terminus, the 428-residue chain is MNRKITVPEAMLPRGVKDFLPNKAAKLEYLKQSLKDVFHRWAFRPIMPPTLEYLDVLERGLGAGLRDKTFRFDDRQNGKLVAFCPDITPQVARIVATRMKGAPLPQRLCYNGKVLRHTEQQAGKDREIIQSGVELIGLQGPEADAEMIAMAIECLQSLGATEFTVDIGQVEFFHGVMDGLNLPAPQALAVQQAIARKDASGLSELLSELSLDDRKYAEVMALPRLFGGREVLDRAADIVVNDRSRRALENLRQILAVLEAYGVEEHVTFDLGELRGLGYHTGVTFQGFLSGMGTAVCSGGRYDTLTARYGMDAPATGFAFNLLNLLMALDRTLESAAVQPFDVMILQSGPDKRAAQSLARALRDQGYACARDIIERSLQDSLDYGRKMHFRHVMVVADQAGDVRLIRLADGSEQTISLQAVLAGEFRL.

The protein belongs to the class-II aminoacyl-tRNA synthetase family. HisZ subfamily. As to quaternary structure, heteromultimer composed of HisG and HisZ subunits.

The protein localises to the cytoplasm. Its pathway is amino-acid biosynthesis; L-histidine biosynthesis; L-histidine from 5-phospho-alpha-D-ribose 1-diphosphate: step 1/9. In terms of biological role, required for the first step of histidine biosynthesis. May allow the feedback regulation of ATP phosphoribosyltransferase activity by histidine. In Syntrophotalea carbinolica (strain DSM 2380 / NBRC 103641 / GraBd1) (Pelobacter carbinolicus), this protein is ATP phosphoribosyltransferase regulatory subunit.